Reading from the N-terminus, the 312-residue chain is Taste receptor type 2 member 7 (312 aa).

Topologically, residues 1–9 (MTYETDTTL) are extracellular. A helical membrane pass occupies residues 10–30 (MFVAVCEALVGILGNAFIALV). Topologically, residues 31–49 (NFMGWMKNRKITAIDLILS) are cytoplasmic. A helical membrane pass occupies residues 50-70 (SLAMSRICLQCIILLDCIILV). The Extracellular portion of the chain corresponds to 71-101 (QYPDTYNRGKEMRIIDFFWTLTNHLSVWFAT). A helical membrane pass occupies residues 102–122 (CLSIFYFFKIANFFHPLFLWI). The Cytoplasmic portion of the chain corresponds to 123-128 (KWRIDK). A helical membrane pass occupies residues 129–149 (LILRTLLACLILSLCFSLPVT). Topologically, residues 150 to 187 (ENLTDDFRRCVKTKERINSTLRCKLNKAGYASVKVNLN) are extracellular. N-linked (GlcNAc...) asparagine glycosylation is found at Asn151 and Asn167. A helical membrane pass occupies residues 188–208 (LVMLFPFSVSLVSFLLLILSL). Residues 209 to 235 (WRHTRQMQLNVTGYNDPSTTAHVKATK) lie on the Cytoplasmic side of the membrane. A helical transmembrane segment spans residues 236–256 (AVISFLVLFIVYCLAFLIATS). At 257–266 (SYFMPESELA) the chain is on the extracellular side. The chain crosses the membrane as a helical span at residues 267–287 (VIWGELIALIYPSSHSFILIL). Topologically, residues 288 to 312 (GNSKLKQASVRVLCRVKTMLKGRKY) are cytoplasmic.

The protein belongs to the G-protein coupled receptor T2R family. As to expression, expressed in subsets of taste receptor cells of the tongue and palate epithelium and exclusively in gustducin-positive cells. Expressed in 15% taste bud cells in circumvallate and foliate papillae but only in 2% in fungiform papillae. Expressed in the duodenum, antrum and fundus (part of the stomach) and in gastric endocrine cells.

Its subcellular location is the membrane. Its function is as follows. Gustducin-coupled receptor implicated in the perception of bitter compounds in the oral cavity and the gastrointestinal tract. Signals through PLCB2 and the calcium-regulated cation channel TRPM5. This Rattus norvegicus (Rat) protein is Taste receptor type 2 member 7 (Tas2r7).